Reading from the N-terminus, the 177-residue chain is Large ribosomal subunit protein uL6 (177 aa).

Belongs to the universal ribosomal protein uL6 family. In terms of assembly, part of the 50S ribosomal subunit.

In terms of biological role, this protein binds to the 23S rRNA, and is important in its secondary structure. It is located near the subunit interface in the base of the L7/L12 stalk, and near the tRNA binding site of the peptidyltransferase center. In Brucella abortus (strain S19), this protein is Large ribosomal subunit protein uL6.